We begin with the raw amino-acid sequence, 294 residues long: 1,4-dihydroxy-2-naphthoate octaprenyltransferase (294 aa).

The next 6 membrane-spanning stretches (helical) occupy residues 35–55, 103–123, 140–160, 166–186, 220–240, and 272–292; these read SAVWWKALLALVVAVALVIGV, AGLALALLSAPWLIMVGATCI, GFGEVAVFVFFGLVAVLGTEY, VDWVGLVLAVSTGALSSSVLV, LLVATGVLTVVLMVATSWCAV, and GLAMVVWAIAVAGALTLAGSV.

It belongs to the MenA family. Type 1 subfamily.

It is found in the cell membrane. The enzyme catalyses an all-trans-polyprenyl diphosphate + 1,4-dihydroxy-2-naphthoate + H(+) = a 2-demethylmenaquinol + CO2 + diphosphate. It participates in quinol/quinone metabolism; menaquinone biosynthesis; menaquinol from 1,4-dihydroxy-2-naphthoate: step 1/2. Conversion of 1,4-dihydroxy-2-naphthoate (DHNA) to demethylmenaquinone (DMK). The chain is 1,4-dihydroxy-2-naphthoate octaprenyltransferase from Mycobacterium leprae (strain TN).